The following is a 727-amino-acid chain: Engulfment and cell motility protein 1 (727 aa).

The residue at position 18 (Tyr18) is a Phosphotyrosine; by HCK. 2 positions are modified to N6-acetyllysine: Lys100 and Lys105. A Phosphotyrosine; by HCK modification is found at Tyr216. In terms of domain architecture, ELMO spans 319–492; the sequence is AQRDIIFELR…VVKEQVMRAL (174 aa). Residue Ser344 is modified to Phosphoserine. Phosphotyrosine; by HCK occurs at positions 395 and 511. A PH domain is found at 555-676; that stretch reads RLVEGTCFRK…DGLNALLGKD (122 aa). The SH3-binding motif lies at 707-714; that stretch reads PDAPPPIP. The residue at position 720 (Tyr720) is a Phosphotyrosine; by HCK.

In terms of assembly, interacts with ADGRB1. Interacts directly with the SH3-domain of DOCK1 via its SH3-binding site. Part of a complex with DOCK1 and RAC1. Part of a complex with DOCK1 and CRK isoform CRK-II. Interacts with PLEKHG6. Interacts with HCK (via SH3 domain). Interacts with ADGRB3. Interacts with DOCK5. Post-translationally, phosphorylated by HCK. As to expression, widely expressed, with a higher expression in the spleen and placenta.

Its subcellular location is the cytoplasm. The protein resides in the cell membrane. Involved in cytoskeletal rearrangements required for phagocytosis of apoptotic cells and cell motility. Acts in association with DOCK1 and CRK. Was initially proposed to be required in complex with DOCK1 to activate Rac Rho small GTPases. May enhance the guanine nucleotide exchange factor (GEF) activity of DOCK1. The polypeptide is Engulfment and cell motility protein 1 (ELMO1) (Homo sapiens (Human)).